The primary structure comprises 148 residues: Small ribosomal subunit protein uS15 (148 aa).

The disordered stretch occupies residues 1-23 (MRKSKEKGRSGSTRPPQLKKPEW).

Belongs to the universal ribosomal protein uS15 family. Part of the 30S ribosomal subunit.

The chain is Small ribosomal subunit protein uS15 from Thermofilum pendens (strain DSM 2475 / Hrk 5).